The primary structure comprises 151 residues: Large ribosomal subunit protein uL13 (151 aa).

The protein belongs to the universal ribosomal protein uL13 family. In terms of assembly, part of the 50S ribosomal subunit.

Functionally, this protein is one of the early assembly proteins of the 50S ribosomal subunit, although it is not seen to bind rRNA by itself. It is important during the early stages of 50S assembly. The polypeptide is Large ribosomal subunit protein uL13 (Petrotoga mobilis (strain DSM 10674 / SJ95)).